A 399-amino-acid polypeptide reads, in one-letter code: 1-deoxy-D-xylulose 5-phosphate reductoisomerase (399 aa).

The NADPH site is built by Thr-13, Gly-14, Ser-15, Ile-16, and Asn-127. A 1-deoxy-D-xylulose 5-phosphate-binding site is contributed by Lys-128. Glu-129 contacts NADPH. Asp-153 contacts Mn(2+). The 1-deoxy-D-xylulose 5-phosphate site is built by Ser-154, Glu-155, Ser-187, and His-210. Residue Glu-155 coordinates Mn(2+). Gly-216 lines the NADPH pocket. 4 residues coordinate 1-deoxy-D-xylulose 5-phosphate: Ser-223, Asn-228, Lys-229, and Glu-232. Residue Glu-232 participates in Mn(2+) binding.

It belongs to the DXR family. Mg(2+) is required as a cofactor. Mn(2+) serves as cofactor.

It catalyses the reaction 2-C-methyl-D-erythritol 4-phosphate + NADP(+) = 1-deoxy-D-xylulose 5-phosphate + NADPH + H(+). It functions in the pathway isoprenoid biosynthesis; isopentenyl diphosphate biosynthesis via DXP pathway; isopentenyl diphosphate from 1-deoxy-D-xylulose 5-phosphate: step 1/6. Functionally, catalyzes the NADPH-dependent rearrangement and reduction of 1-deoxy-D-xylulose-5-phosphate (DXP) to 2-C-methyl-D-erythritol 4-phosphate (MEP). This is 1-deoxy-D-xylulose 5-phosphate reductoisomerase from Bordetella avium (strain 197N).